The chain runs to 259 residues: MSKYKLIMLRHGEGAWNKENRFCSWVDQKLNSEGMEEARNCGKQLKALNFEFDLVFTSVLNRSIHTAWLILEELGQEWVPVESSWRLNERHYGALIGLNREKMALNHGEEQVRIWRRSYNVTPPPIEESHPYYHEIYSDRRYRVCDVPLDQLPRSESLKDVLERLLPYWNERIAPEVLRGKTVLISAHGNSSRALLKHLEGISDEDIINITLPTGVPILLELDENLRAVGPHQFLGDQEAIQAAIKKVEDQGKVKRAEK.

At Ser2 the chain carries N-acetylserine. Residues 10-17 (RHGEGAWN), 23-24 (CS), Arg62, 89-92 (ERHY), Arg100, and 116-117 (RR) contribute to the substrate site. His11 (tele-phosphohistidine intermediate) is an active-site residue. The active-site Proton donor/acceptor is the Glu89. Position 122 is a phosphothreonine (Thr122). Substrate is bound at residue 189–190 (GN).

Belongs to the phosphoglycerate mutase family. BPG-dependent PGAM subfamily. As to quaternary structure, homodimer. In terms of tissue distribution, expressed in red blood cells.

The catalysed reaction is (2R)-3-phospho-glyceroyl phosphate = (2R)-2,3-bisphosphoglycerate + H(+). It carries out the reaction (2R)-2-phosphoglycerate = (2R)-3-phosphoglycerate. With respect to regulation, at alkaline pH BPGM favors the synthase reaction; however, at lower pH the phosphatase reaction is dominant. Inhibited by citrate. Functionally, plays a major role in regulating hemoglobin oxygen affinity by controlling the levels of its allosteric effector 2,3-bisphosphoglycerate (2,3-BPG). Also exhibits mutase (EC 5.4.2.11) activity. This is Bisphosphoglycerate mutase (BPGM) from Oryctolagus cuniculus (Rabbit).